The primary structure comprises 380 residues: Cytochrome b (380 aa).

4 consecutive transmembrane segments (helical) span residues 33 to 53 (FGSLLGLCLATQILTGLFLAM), 77 to 98 (WLIRNIHANGASFFFICIYMHI), 113 to 133 (WNIGVVLLLLTMMTAFVGYVL), and 178 to 198 (FFAFHFLFPFVIAAATVLHLL). H83 and H97 together coordinate heme b. Positions 182 and 196 each coordinate heme b. An a ubiquinone-binding site is contributed by H201. Helical transmembrane passes span 226–246 (YKDLLGFVAMLLGLTSLALFA), 288–308 (LGGVLALLFSILVLMVVPILH), 320–340 (LTQFLFWTLVADMLILTWIGG), and 347–367 (FIIIGQVASVIYFTIFLVLAP).

This sequence belongs to the cytochrome b family. In terms of assembly, the cytochrome bc1 complex contains 3 respiratory subunits (MT-CYB, CYC1 and UQCRFS1), 2 core proteins (UQCRC1 and UQCRC2) and probably 6 low-molecular weight proteins. Heme b is required as a cofactor.

It localises to the mitochondrion inner membrane. Component of the ubiquinol-cytochrome c reductase complex (complex III or cytochrome b-c1 complex) that is part of the mitochondrial respiratory chain. The b-c1 complex mediates electron transfer from ubiquinol to cytochrome c. Contributes to the generation of a proton gradient across the mitochondrial membrane that is then used for ATP synthesis. This chain is Cytochrome b (mt-cyb), found in Salmo trutta (Brown trout).